We begin with the raw amino-acid sequence, 572 residues long: Acyl-coenzyme A synthetase ACSM2, mitochondrial (572 aa).

The N-terminal 46 residues, 1–46, are a transit peptide targeting the mitochondrion; that stretch reads MHWLWKIPRLCTFWGTEMFHRTFHMNIKKLMPIQWGHQEVPAKFNF. A CoA-binding site is contributed by Gln-139. ATP contacts are provided by residues 221-229, 359-364, Asp-446, and Arg-461; these read TSGTSGPPK and EIYGQT. Thr-364 lines the substrate pocket. A CoA-binding site is contributed by 469 to 471; sequence SGY. A substrate-binding site is contributed by Arg-472. Residues Arg-501, Lys-532, and 540-542 contribute to the CoA site; that span reads YPR. Lys-557 provides a ligand contact to ATP.

The protein belongs to the ATP-dependent AMP-binding enzyme family. As to quaternary structure, monomer. Requires Mg(2+) as cofactor. Mn(2+) is required as a cofactor. Detected in kidney, in proximal tubules.

The protein resides in the mitochondrion. The catalysed reaction is a medium-chain fatty acid + ATP + CoA = a medium-chain fatty acyl-CoA + AMP + diphosphate. The enzyme catalyses benzoate + ATP + CoA = benzoyl-CoA + AMP + diphosphate. It catalyses the reaction hexanoate + ATP + CoA = hexanoyl-CoA + AMP + diphosphate. It carries out the reaction butanoate + ATP + CoA = butanoyl-CoA + AMP + diphosphate. The catalysed reaction is octanoate + ATP + CoA = octanoyl-CoA + AMP + diphosphate. The enzyme catalyses decanoate + ATP + CoA = decanoyl-CoA + AMP + diphosphate. Its function is as follows. Catalyzes the activation of fatty acids by CoA to produce an acyl-CoA, the first step in fatty acid metabolism. Capable of activating medium-chain fatty acids (e.g. butyric (C4) to decanoic (C10) acids), and certain carboxylate-containing xenobiotics, e.g. benzoate. This Rattus norvegicus (Rat) protein is Acyl-coenzyme A synthetase ACSM2, mitochondrial (Acsm2).